A 597-amino-acid chain; its full sequence is uncharacterized protein (597 aa).

Disordered regions lie at residues 165-197 and 278-344; these read NSRA…IFSK and ERSS…RGTL. The span at 169–178 shows a compositional bias: pro residues; sequence VPPPAPPNPP. Residues 179-189 show a composition bias toward basic and acidic residues; sequence KMEKHMSHDTS. Low complexity predominate over residues 293 to 313; that stretch reads STEVSITSSSPSPSSSSSTST. In terms of domain architecture, SAM spans 402-465; the sequence is WSLDDVLLWL…LDDLSKIIEN (64 aa). Residues 576–597 form a disordered region; sequence EESQQKESSSSGISSSPQTPTE. A compositionally biased stretch (low complexity) spans 581-597; the sequence is KESSSSGISSSPQTPTE.

This is an uncharacterized protein from Caenorhabditis elegans.